The following is a 143-amino-acid chain: MAAMDTGQRADPSNPGDKEGDLQGLWQELYQLQAKQKKLKREVEKHKLFEDYLIKVLEKIPEGCTGWEEPEEVLVEATVKHYGKLFTASQDTQKRLEAFCQMIQAVHRSLESLEEDHRALIASRSGCVSCRRSATASRSSGGS.

The disordered stretch occupies residues 1–21 (MAAMDTGQRADPSNPGDKEGD).

This is an uncharacterized protein from Homo sapiens (Human).